Reading from the N-terminus, the 266-residue chain is Putative carbamate hydrolase RutD (266 aa).

In terms of domain architecture, AB hydrolase-1 spans 15-239; that stretch reads PVVVLSAGLG…RVEMPWGGHA (225 aa).

It belongs to the AB hydrolase superfamily. Hydrolase RutD family.

It catalyses the reaction carbamate + 2 H(+) = NH4(+) + CO2. Functionally, involved in pyrimidine catabolism. May facilitate the hydrolysis of carbamate, a reaction that can also occur spontaneously. This chain is Putative carbamate hydrolase RutD, found in Klebsiella variicola (strain At-22).